The following is a 118-amino-acid chain: Non-specific lipid-transfer protein 5 (118 aa).

The N-terminal stretch at 1–25 (MEGLLKLSTLVIVCMLVTAPMASEA) is a signal peptide. Disulfide bonds link cysteine 29-cysteine 76, cysteine 39-cysteine 53, cysteine 54-cysteine 100, and cysteine 74-cysteine 114.

This sequence belongs to the plant LTP family.

Plant non-specific lipid-transfer proteins transfer phospholipids as well as galactolipids across membranes. May play a role in wax or cutin deposition in the cell walls of expanding epidermal cells and certain secretory tissues. In Arabidopsis thaliana (Mouse-ear cress), this protein is Non-specific lipid-transfer protein 5 (LTP5).